The chain runs to 446 residues: tRNA modification GTPase MnmE (446 aa).

R24, E81, and K120 together coordinate (6S)-5-formyl-5,6,7,8-tetrahydrofolate. Residues 216 to 368 form the TrmE-type G domain; that stretch reads GLHAVLIGPP…LHIRLRELAL (153 aa). N226 provides a ligand contact to K(+). Residues 226–231, 245–251, and 270–273 contribute to the GTP site; these read NAGKSS, TDVAGTT, and DTAG. S230 contacts Mg(2+). Residues T245, V247, and T250 each contribute to the K(+) site. Residue T251 participates in Mg(2+) binding. K446 lines the (6S)-5-formyl-5,6,7,8-tetrahydrofolate pocket.

Belongs to the TRAFAC class TrmE-Era-EngA-EngB-Septin-like GTPase superfamily. TrmE GTPase family. In terms of assembly, homodimer. Heterotetramer of two MnmE and two MnmG subunits. K(+) is required as a cofactor.

The protein localises to the cytoplasm. Its function is as follows. Exhibits a very high intrinsic GTPase hydrolysis rate. Involved in the addition of a carboxymethylaminomethyl (cmnm) group at the wobble position (U34) of certain tRNAs, forming tRNA-cmnm(5)s(2)U34. The chain is tRNA modification GTPase MnmE from Xanthomonas oryzae pv. oryzae (strain KACC10331 / KXO85).